The chain runs to 341 residues: L-threonine 3-dehydrogenase (341 aa).

Cys38 serves as a coordination point for Zn(2+). Residues Thr40 and His43 each act as charge relay system in the active site. Positions 63, 64, 93, 96, 99, and 107 each coordinate Zn(2+). Residues Ile175, Asp195, Arg200, 262–264 (LGI), and 286–287 (IY) each bind NAD(+).

It belongs to the zinc-containing alcohol dehydrogenase family. Homotetramer. Requires Zn(2+) as cofactor.

It is found in the cytoplasm. The catalysed reaction is L-threonine + NAD(+) = (2S)-2-amino-3-oxobutanoate + NADH + H(+). The protein operates within amino-acid degradation; L-threonine degradation via oxydo-reductase pathway; glycine from L-threonine: step 1/2. Its function is as follows. Catalyzes the NAD(+)-dependent oxidation of L-threonine to 2-amino-3-ketobutyrate. This chain is L-threonine 3-dehydrogenase, found in Shewanella baltica (strain OS223).